Here is a 76-residue protein sequence, read N- to C-terminus: Large ribosomal subunit protein eL38 (76 aa).

Belongs to the eukaryotic ribosomal protein eL38 family.

In Lysiphlebus testaceipes (Greenbugs aphid parastoid), this protein is Large ribosomal subunit protein eL38 (RpL38).